The primary structure comprises 137 residues: MLQPKRTKFRKQMTGHNRGLALRGSKVSFGEFALKAVARGRLTARQIESARRALTRHVKRGGKIWIRVFPDKPISKKPLEVRMGKGKGSVEYWVAQIQPGKVLYEIEGVSEELAREAFALAAAKLPLATSFVKRTVM.

It belongs to the universal ribosomal protein uL16 family. As to quaternary structure, part of the 50S ribosomal subunit.

Functionally, binds 23S rRNA and is also seen to make contacts with the A and possibly P site tRNAs. In Pseudomonas putida (strain ATCC 47054 / DSM 6125 / CFBP 8728 / NCIMB 11950 / KT2440), this protein is Large ribosomal subunit protein uL16.